The primary structure comprises 273 residues: Putative cysteine-rich repeat secretory protein 40 (273 aa).

An N-terminal signal peptide occupies residues 1–32; sequence MYPSCSLLQRLVWFPFLALVATQLLFIRNVSS. 2 Gnk2-homologous domains span residues 39–141 and 151–264; these read YLHH…SISV and YENN…LYPF.

This sequence belongs to the cysteine-rich repeat secretory protein family.

Its subcellular location is the secreted. The protein is Putative cysteine-rich repeat secretory protein 40 (CRRSP40) of Arabidopsis thaliana (Mouse-ear cress).